Consider the following 261-residue polypeptide: 3-methyl-2-oxobutanoate hydroxymethyltransferase (261 aa).

Aspartate 42 and aspartate 81 together coordinate Mg(2+). 3-methyl-2-oxobutanoate-binding positions include aspartate 42–serine 43, aspartate 81, and lysine 110. Residue glutamate 112 participates in Mg(2+) binding. Glutamate 179 serves as the catalytic Proton acceptor.

Belongs to the PanB family. As to quaternary structure, homodecamer; pentamer of dimers. Mg(2+) is required as a cofactor.

The protein localises to the cytoplasm. It catalyses the reaction 3-methyl-2-oxobutanoate + (6R)-5,10-methylene-5,6,7,8-tetrahydrofolate + H2O = 2-dehydropantoate + (6S)-5,6,7,8-tetrahydrofolate. It functions in the pathway cofactor biosynthesis; coenzyme A biosynthesis. In terms of biological role, catalyzes the reversible reaction in which hydroxymethyl group from 5,10-methylenetetrahydrofolate is transferred onto alpha-ketoisovalerate to form ketopantoate. This Pyrobaculum neutrophilum (strain DSM 2338 / JCM 9278 / NBRC 100436 / V24Sta) (Thermoproteus neutrophilus) protein is 3-methyl-2-oxobutanoate hydroxymethyltransferase.